A 79-amino-acid chain; its full sequence is uncharacterized protein (79 aa).

The signal sequence occupies residues 1-24 (MKMNPCTVILCKSLFFFCLFQVDC). An N-linked (GlcNAc...) asparagine glycan is attached at Asn33.

The protein resides in the secreted. This is an uncharacterized protein from Saccharomyces cerevisiae (strain ATCC 204508 / S288c) (Baker's yeast).